A 512-amino-acid chain; its full sequence is Glutathione-binding protein GsiB (512 aa).

The N-terminal stretch at 1 to 26 (MTQFITHKWLAALGLASSIAAFPALA) is a signal peptide.

Belongs to the bacterial solute-binding protein 5 family. The complex is composed of two ATP-binding proteins (GsiA), two transmembrane proteins (GsiC and GsiD) and a solute-binding protein (GsiB).

The protein localises to the periplasm. Functionally, part of the ABC transporter complex GsiABCD involved in glutathione import. Binds glutathione. The protein is Glutathione-binding protein GsiB of Salmonella paratyphi A (strain ATCC 9150 / SARB42).